A 171-amino-acid polypeptide reads, in one-letter code: Peptide deformylase (171 aa).

Fe cation is bound by residues Cys-91 and His-133. Glu-134 is an active-site residue. His-137 contributes to the Fe cation binding site.

It belongs to the polypeptide deformylase family. Fe(2+) serves as cofactor.

The enzyme catalyses N-terminal N-formyl-L-methionyl-[peptide] + H2O = N-terminal L-methionyl-[peptide] + formate. Its function is as follows. Removes the formyl group from the N-terminal Met of newly synthesized proteins. Requires at least a dipeptide for an efficient rate of reaction. N-terminal L-methionine is a prerequisite for activity but the enzyme has broad specificity at other positions. The sequence is that of Peptide deformylase from Mannheimia succiniciproducens (strain KCTC 0769BP / MBEL55E).